We begin with the raw amino-acid sequence, 79 residues long: Succinate dehydrogenase assembly factor 1, mitochondrial (79 aa).

This sequence belongs to the complex I LYR family. SDHAF1 subfamily. As to quaternary structure, interacts with sdh2 within an sdh1-sdh2 subcomplex.

The protein resides in the mitochondrion matrix. Functionally, plays an essential role in the assembly of succinate dehydrogenase (SDH), an enzyme complex (also referred to as respiratory complex II) that is a component of both the tricarboxylic acid (TCA) cycle and the mitochondrial electron transport chain, and which couples the oxidation of succinate to fumarate with the reduction of ubiquinone (coenzyme Q) to ubiquinol. Promotes maturation of the iron-sulfur protein subunit sdh2 of the SDH catalytic dimer, protecting it from the deleterious effects of oxidants. May act together with SDHAF3. The polypeptide is Succinate dehydrogenase assembly factor 1, mitochondrial (Schizosaccharomyces pombe (strain 972 / ATCC 24843) (Fission yeast)).